Consider the following 465-residue polypeptide: 3-isopropylmalate dehydratase large subunit (465 aa).

[4Fe-4S] cluster-binding residues include Cys-347, Cys-407, and Cys-410.

This sequence belongs to the aconitase/IPM isomerase family. LeuC type 1 subfamily. Heterodimer of LeuC and LeuD. It depends on [4Fe-4S] cluster as a cofactor.

It catalyses the reaction (2R,3S)-3-isopropylmalate = (2S)-2-isopropylmalate. Its pathway is amino-acid biosynthesis; L-leucine biosynthesis; L-leucine from 3-methyl-2-oxobutanoate: step 2/4. In terms of biological role, catalyzes the isomerization between 2-isopropylmalate and 3-isopropylmalate, via the formation of 2-isopropylmaleate. This chain is 3-isopropylmalate dehydratase large subunit, found in Buchnera aphidicola subsp. Pemphigus spyrothecae.